We begin with the raw amino-acid sequence, 318 residues long: Thymidylate synthase (318 aa).

Residues Arg-25 and 180–181 contribute to the dUMP site; that span reads RR. Cys-200 acts as the Nucleophile in catalysis. DUMP contacts are provided by residues 220–223, Asn-231, and 261–263; these read RSGD and HIY. Asp-223 is a binding site for (6R)-5,10-methylene-5,6,7,8-tetrahydrofolate. Ala-317 contributes to the (6R)-5,10-methylene-5,6,7,8-tetrahydrofolate binding site.

This sequence belongs to the thymidylate synthase family. Bacterial-type ThyA subfamily. In terms of assembly, homodimer.

It is found in the cytoplasm. The catalysed reaction is dUMP + (6R)-5,10-methylene-5,6,7,8-tetrahydrofolate = 7,8-dihydrofolate + dTMP. It participates in pyrimidine metabolism; dTTP biosynthesis. Its function is as follows. Catalyzes the reductive methylation of 2'-deoxyuridine-5'-monophosphate (dUMP) to 2'-deoxythymidine-5'-monophosphate (dTMP) while utilizing 5,10-methylenetetrahydrofolate (mTHF) as the methyl donor and reductant in the reaction, yielding dihydrofolate (DHF) as a by-product. This enzymatic reaction provides an intracellular de novo source of dTMP, an essential precursor for DNA biosynthesis. This chain is Thymidylate synthase, found in Bacillus cytotoxicus (strain DSM 22905 / CIP 110041 / 391-98 / NVH 391-98).